Here is a 342-residue protein sequence, read N- to C-terminus: Holliday junction branch migration complex subunit RuvB (342 aa).

A large ATPase domain (RuvB-L) region spans residues 1-182; the sequence is MRIEALNTAP…FGINSRLDYY (182 aa). Residues isoleucine 21, arginine 22, glycine 63, lysine 66, threonine 67, threonine 68, 129 to 131, arginine 172, tyrosine 182, and arginine 219 each bind ATP; that span reads EDY. Threonine 67 is a Mg(2+) binding site. The small ATPAse domain (RuvB-S) stretch occupies residues 183-253; it reads SPELLQSIIV…VARRTLESLE (71 aa). Positions 256-342 are head domain (RuvB-H); it reads EGGLDDMDKK…DHGPLFDHNS (87 aa). Arginine 311 and arginine 316 together coordinate DNA.

It belongs to the RuvB family. In terms of assembly, homohexamer. Forms an RuvA(8)-RuvB(12)-Holliday junction (HJ) complex. HJ DNA is sandwiched between 2 RuvA tetramers; dsDNA enters through RuvA and exits via RuvB. An RuvB hexamer assembles on each DNA strand where it exits the tetramer. Each RuvB hexamer is contacted by two RuvA subunits (via domain III) on 2 adjacent RuvB subunits; this complex drives branch migration. In the full resolvosome a probable DNA-RuvA(4)-RuvB(12)-RuvC(2) complex forms which resolves the HJ.

It is found in the cytoplasm. The enzyme catalyses ATP + H2O = ADP + phosphate + H(+). Its function is as follows. The RuvA-RuvB-RuvC complex processes Holliday junction (HJ) DNA during genetic recombination and DNA repair, while the RuvA-RuvB complex plays an important role in the rescue of blocked DNA replication forks via replication fork reversal (RFR). RuvA specifically binds to HJ cruciform DNA, conferring on it an open structure. The RuvB hexamer acts as an ATP-dependent pump, pulling dsDNA into and through the RuvAB complex. RuvB forms 2 homohexamers on either side of HJ DNA bound by 1 or 2 RuvA tetramers; 4 subunits per hexamer contact DNA at a time. Coordinated motions by a converter formed by DNA-disengaged RuvB subunits stimulates ATP hydrolysis and nucleotide exchange. Immobilization of the converter enables RuvB to convert the ATP-contained energy into a lever motion, pulling 2 nucleotides of DNA out of the RuvA tetramer per ATP hydrolyzed, thus driving DNA branch migration. The RuvB motors rotate together with the DNA substrate, which together with the progressing nucleotide cycle form the mechanistic basis for DNA recombination by continuous HJ branch migration. Branch migration allows RuvC to scan DNA until it finds its consensus sequence, where it cleaves and resolves cruciform DNA. In Chlorobaculum parvum (strain DSM 263 / NCIMB 8327) (Chlorobium vibrioforme subsp. thiosulfatophilum), this protein is Holliday junction branch migration complex subunit RuvB.